Reading from the N-terminus, the 310-residue chain is p-hydroxybenzoic acid efflux pump subunit AaeA (310 aa).

The chain crosses the membrane as a helical span at residues 12-32 (AITVILVILAFVAIFRAWVYY).

It belongs to the membrane fusion protein (MFP) (TC 8.A.1) family.

It is found in the cell inner membrane. Functionally, forms an efflux pump with AaeB. The protein is p-hydroxybenzoic acid efflux pump subunit AaeA of Klebsiella pneumoniae (strain 342).